Here is a 339-residue protein sequence, read N- to C-terminus: Holliday junction branch migration complex subunit RuvB (339 aa).

Residues 2 to 187 (KDVNDEERII…FGIIEHMQYY (186 aa)) form a large ATPase domain (RuvB-L) region. ATP is bound by residues L26, R27, G68, K71, T72, T73, 134–136 (EDF), R177, Y187, and R224. A Mg(2+)-binding site is contributed by T72. The small ATPAse domain (RuvB-S) stretch occupies residues 188–258 (SIDDLEKIIQ…TTKHSLHLLE (71 aa)). The tract at residues 261–339 (DEGLDQTDRK…QLGYPPKKAE (79 aa)) is head domain (RuvB-H). 2 residues coordinate DNA: R316 and R321.

It belongs to the RuvB family. In terms of assembly, homohexamer. Forms an RuvA(8)-RuvB(12)-Holliday junction (HJ) complex. HJ DNA is sandwiched between 2 RuvA tetramers; dsDNA enters through RuvA and exits via RuvB. An RuvB hexamer assembles on each DNA strand where it exits the tetramer. Each RuvB hexamer is contacted by two RuvA subunits (via domain III) on 2 adjacent RuvB subunits; this complex drives branch migration. In the full resolvosome a probable DNA-RuvA(4)-RuvB(12)-RuvC(2) complex forms which resolves the HJ.

It localises to the cytoplasm. The enzyme catalyses ATP + H2O = ADP + phosphate + H(+). Functionally, the RuvA-RuvB-RuvC complex processes Holliday junction (HJ) DNA during genetic recombination and DNA repair, while the RuvA-RuvB complex plays an important role in the rescue of blocked DNA replication forks via replication fork reversal (RFR). RuvA specifically binds to HJ cruciform DNA, conferring on it an open structure. The RuvB hexamer acts as an ATP-dependent pump, pulling dsDNA into and through the RuvAB complex. RuvB forms 2 homohexamers on either side of HJ DNA bound by 1 or 2 RuvA tetramers; 4 subunits per hexamer contact DNA at a time. Coordinated motions by a converter formed by DNA-disengaged RuvB subunits stimulates ATP hydrolysis and nucleotide exchange. Immobilization of the converter enables RuvB to convert the ATP-contained energy into a lever motion, pulling 2 nucleotides of DNA out of the RuvA tetramer per ATP hydrolyzed, thus driving DNA branch migration. The RuvB motors rotate together with the DNA substrate, which together with the progressing nucleotide cycle form the mechanistic basis for DNA recombination by continuous HJ branch migration. Branch migration allows RuvC to scan DNA until it finds its consensus sequence, where it cleaves and resolves cruciform DNA. This chain is Holliday junction branch migration complex subunit RuvB, found in Lactobacillus gasseri (strain ATCC 33323 / DSM 20243 / BCRC 14619 / CIP 102991 / JCM 1131 / KCTC 3163 / NCIMB 11718 / NCTC 13722 / AM63).